We begin with the raw amino-acid sequence, 622 residues long: MRVLCVAEKNSIAKSVASILGGGHVRRRDTRSKYVKNYDFSFNFGGNVGSSDVTMTSVSGHLTEASFPSEYSSWSSVPQDVLFDAQIITSVSKNAEVLADNIKKEARNAQYLYIWTDCDREGEHIGVEISNVARASNPSIQVIRADFNNLERSHIISAAKRPRDVSKNAADAVDARIELDFRLGAIFTRLQTIQLQKSFDILQNKIISYGPCQFPTLGFVVDRWQRVEDFVPETYWHLRFVDKRQGKTIQFNWERAKVFDRLTTMIILENCLECKTAKVVNITQKPKTKYKPLPLSTVELTKLGPKHLRISAKKTLELAENLYTNGFVSYPRTETDQFDSSMNLHAIIQKLTGAQEWDSYAEGLLAGDYRPPRKGKHNDRAHPPIHPVQMVHRSALPSQDHWKVYELITRRFLACCSDNAKGAETLVQVKMEEELFSKKGLLVTEKNYLEVYPYEKWESSDQLPEYRLHEEFQPHILDMMDSSTSSPSYITEPELIALMDANGIGTDATMAEHIEKVQEREYVIKRKKRGQGVTEFVPSSLGVALAKGYDEIGLEWSLTKPFLRKEMEVQLKNIENGQLNRNVLVHMILTQFRDVFHLTKQRFDCLKNSCRVYLMSHNEPQT.

The region spanning 2–148 is the Toprim domain; sequence RVLCVAEKNS…SIQVIRADFN (147 aa). The 431-residue stretch at 166 to 596 folds into the Topo IA-type catalytic domain; it reads SKNAADAVDA…MILTQFRDVF (431 aa). The O-(5'-phospho-DNA)-tyrosine intermediate role is filled by tyrosine 330.

It belongs to the type IA topoisomerase family. Interacts with hus2.

It catalyses the reaction ATP-independent breakage of single-stranded DNA, followed by passage and rejoining.. In terms of biological role, releases the supercoiling and torsional tension of DNA introduced during the DNA replication and transcription by transiently cleaving and rejoining one strand of the DNA duplex. Introduces a single-strand break via transesterification at a target site in duplex DNA. The scissile phosphodiester is attacked by the catalytic tyrosine of the enzyme, resulting in the formation of a DNA-(5'-phosphotyrosyl)-enzyme intermediate and the expulsion of a 3'-OH DNA strand. The free DNA strand than undergoes passage around the unbroken strand thus removing DNA supercoils. Finally, in the religation step, the DNA 3'-OH attacks the covalent intermediate to expel the active-site tyrosine and restore the DNA phosphodiester backbone. This is DNA topoisomerase 3 (top3) from Schizosaccharomyces pombe (strain 972 / ATCC 24843) (Fission yeast).